Reading from the N-terminus, the 815-residue chain is Phenylalanine--tRNA ligase beta subunit (815 aa).

The tRNA-binding domain occupies Ala40 to Arg155. Residues Pro406–Ala485 form the B5 domain. Residues Asp463, Asp469, Glu472, and Glu473 each coordinate Mg(2+). Residues Ser712–Arg814 enclose the FDX-ACB domain.

This sequence belongs to the phenylalanyl-tRNA synthetase beta subunit family. Type 1 subfamily. In terms of assembly, tetramer of two alpha and two beta subunits. Mg(2+) serves as cofactor.

It localises to the cytoplasm. The enzyme catalyses tRNA(Phe) + L-phenylalanine + ATP = L-phenylalanyl-tRNA(Phe) + AMP + diphosphate + H(+). The polypeptide is Phenylalanine--tRNA ligase beta subunit (Cupriavidus pinatubonensis (strain JMP 134 / LMG 1197) (Cupriavidus necator (strain JMP 134))).